The chain runs to 393 residues: CCCH-type zinc finger protein oma-2 (393 aa).

A disordered region spans residues 1-26; the sequence is MDMLKENVIQNNEARTESSVEPSHPD. The segment covering 14–26 has biased composition (basic and acidic residues); it reads ARTESSVEPSHPD. 2 C3H1-type zinc fingers span residues 105 to 133 and 147 to 175; these read SYKTVICQAWLESKTCAFAENCRFAHGEE and KYRTKLCDKYTTTGLCPYGKRCLFIHPDN. Disordered regions lie at residues 227-251 and 311-340; these read TPDEPAANMPLGPTPVSIRGPRYEL and KQSTPGGVSGYSSSGSTPSQDSDSSPLTAA. Positions 313–340 are enriched in low complexity; that stretch reads STPGGVSGYSSSGSTPSQDSDSSPLTAA. A Phosphothreonine; by GSK3 modification is found at T327.

Exclusively expressed in the hermaphrodite gonad. Expression only in cellulized oocytes. Widely distributed throughout gonadal oocytes from the mitotic stage to the developing diakinesis stage.

The protein localises to the cytoplasm. The protein resides in the cytoplasmic granule. It localises to the cytoskeleton. It is found in the microtubule organizing center. Its subcellular location is the centrosome. In terms of biological role, zinc-finger RNA-binding protein that binds to 5'-UA[AU]-3' motifs in the 3'-UTR of maternal mRNAs to suppress translation in oocytes and embryos. Acts redundantly with oma-1 to control the temporal expression and distribution of maternal proteins and thereby promote meiotic progression, oocyte maturation, fertilization and embryonic development. Also, together with oma-1, is involved in P-granule distribution during embryonic development. This Caenorhabditis elegans protein is CCCH-type zinc finger protein oma-2.